Here is a 177-residue protein sequence, read N- to C-terminus: Large ribosomal subunit protein uL6 (177 aa).

Positions Arg152–Arg171 are enriched in basic and acidic residues. Positions Arg152–Lys177 are disordered.

Belongs to the universal ribosomal protein uL6 family. Part of the 50S ribosomal subunit.

Functionally, this protein binds to the 23S rRNA, and is important in its secondary structure. It is located near the subunit interface in the base of the L7/L12 stalk, and near the tRNA binding site of the peptidyltransferase center. The sequence is that of Large ribosomal subunit protein uL6 from Shewanella putrefaciens (strain CN-32 / ATCC BAA-453).